Here is a 247-residue protein sequence, read N- to C-terminus: Ribonuclease PH (247 aa).

Phosphate contacts are provided by residues Arg90 and 128–130 (GTR).

Belongs to the RNase PH family. Homohexameric ring arranged as a trimer of dimers.

It catalyses the reaction tRNA(n+1) + phosphate = tRNA(n) + a ribonucleoside 5'-diphosphate. In terms of biological role, phosphorolytic 3'-5' exoribonuclease that plays an important role in tRNA 3'-end maturation. Removes nucleotide residues following the 3'-CCA terminus of tRNAs; can also add nucleotides to the ends of RNA molecules by using nucleoside diphosphates as substrates, but this may not be physiologically important. Probably plays a role in initiation of 16S rRNA degradation (leading to ribosome degradation) during starvation. The chain is Ribonuclease PH from Synechococcus sp. (strain CC9605).